A 282-amino-acid chain; its full sequence is MRVVLIVDIVRQEEKLIAKALEENKVQYDIINVAQEPLPFNKALGRYDVAIIRPVSMYRALYSSAVLEAAGVHTINSSDVINVCGDKILTYSKLYREGIPIPDSIIALSAEAALKAYEQRGFPLIDKPPIGSWGRLVSLIRDVFEGKTIIEHRELMGNSALKAHIVQEYIQYKGRDIRCIAIGEELLGCYARNIPPNEWRANVALGGTPSNIEVDEKLKETVVKAVSIVHGEFVSIDILEHPNKGYVVNELNDVPEFKGFMVATNINVAQKLVEYIKENYSK.

ATP contacts are provided by residues lysine 87, lysine 127, 131–137 (GSWGRLV), and 167–178 (QEYIQYKGRDIR). In terms of domain architecture, ATP-grasp spans 91-277 (YSKLYREGIP…VAQKLVEYIK (187 aa)). Residue arginine 192 participates in substrate binding. An ATP-binding site is contributed by asparagine 202. Substrate is bound at residue 203-204 (VA). Residues aspartate 237, glutamate 250, and asparagine 252 each contribute to the Mg(2+) site. 256–260 (EFKGF) lines the substrate pocket. The GF motif that is essential for ArgX substrate specificity motif lies at 259–260 (GF).

The protein belongs to the RimK family. LysX subfamily. In terms of assembly, homotetramer. Interacts with LysW. It depends on Mg(2+) as a cofactor.

The enzyme catalyses [amino-group carrier protein]-C-terminal-L-glutamate + L-glutamate + ATP = [amino-group carrier protein]-C-terminal-gamma-(L-glutamyl)-L-glutamate + ADP + phosphate + H(+). The protein operates within amino-acid biosynthesis; L-arginine biosynthesis. Functionally, catalyzes the ATP-dependent formation of a covalent bond between the amino group of glutamate and the gamma-carboxyl group of the C-terminal glutamate residue in LysW. The sequence is that of Glutamate--LysW ligase ArgX from Sulfurisphaera tokodaii (strain DSM 16993 / JCM 10545 / NBRC 100140 / 7) (Sulfolobus tokodaii).